Consider the following 638-residue polypeptide: Dihydrolipoyllysine-residue acetyltransferase component of pyruvate dehydrogenase complex (638 aa).

Lipoyl-binding domains are found at residues 2–74 (SEII…IELE) and 117–191 (SQEV…LTLR). The residue at position 40 (lysine 40) is an N6-lipoyllysine. Over residues 90–117 (PAAPTQAVDEAEAPSPGASATPAPAAAS) the composition is skewed to low complexity. The disordered stretch occupies residues 90-119 (PAAPTQAVDEAEAPSPGASATPAPAAASQE). Position 157 is an N6-lipoyllysine (lysine 157). Residues 201 to 220 (APAAAAAASPAPAPLAPAAA) are disordered. Residues 222–296 (PQEVKVPDIG…GTGDQILTLR (75 aa)) enclose the Lipoyl-binding 3 domain. N6-lipoyllysine is present on lysine 262. Over residues 301 to 320 (APSGPRARGSPGQAAAAPGA) the composition is skewed to low complexity. The disordered stretch occupies residues 301 to 336 (APSGPRARGSPGQAAAAPGAAPAPAPVGAPSRNGAK). The 38-residue stretch at 338-375 (HAGPAVRQLAREFGVELAAINSTGPRGRILKEDVQAYV) folds into the Peripheral subunit-binding (PSBD) domain. A catalytic region spans residues 382–638 (AKEAPAAGAA…LLADIRAILL (257 aa)). Histidine 611 is an active-site residue.

It belongs to the 2-oxoacid dehydrogenase family. In terms of assembly, forms a 24-polypeptide structural core with octahedral symmetry. (R)-lipoate serves as cofactor.

The enzyme catalyses N(6)-[(R)-dihydrolipoyl]-L-lysyl-[protein] + acetyl-CoA = N(6)-[(R)-S(8)-acetyldihydrolipoyl]-L-lysyl-[protein] + CoA. The pyruvate dehydrogenase complex catalyzes the overall conversion of pyruvate to acetyl-CoA and CO(2). It contains multiple copies of three enzymatic components: pyruvate dehydrogenase (E1), dihydrolipoamide acetyltransferase (E2) and lipoamide dehydrogenase (E3). This Azotobacter vinelandii protein is Dihydrolipoyllysine-residue acetyltransferase component of pyruvate dehydrogenase complex.